Consider the following 258-residue polypeptide: UPF0246 protein YaaA (258 aa).

The protein belongs to the UPF0246 family.

This Escherichia coli (strain 55989 / EAEC) protein is UPF0246 protein YaaA.